A 346-amino-acid polypeptide reads, in one-letter code: tRNA-specific 2-thiouridylase MnmA (346 aa).

6–13 (AMSGGTDS) provides a ligand contact to ATP. Catalysis depends on Cys-90, which acts as the Nucleophile. Cys-90 and Cys-187 are joined by a disulfide. Residue Gly-114 coordinates ATP. The interval 137 to 139 (KDQ) is interaction with tRNA. Catalysis depends on Cys-187, which acts as the Cysteine persulfide intermediate. Positions 292–293 (RY) are interaction with tRNA.

Belongs to the MnmA/TRMU family.

Its subcellular location is the cytoplasm. The catalysed reaction is S-sulfanyl-L-cysteinyl-[protein] + uridine(34) in tRNA + AH2 + ATP = 2-thiouridine(34) in tRNA + L-cysteinyl-[protein] + A + AMP + diphosphate + H(+). Its function is as follows. Catalyzes the 2-thiolation of uridine at the wobble position (U34) of tRNA, leading to the formation of s(2)U34. This chain is tRNA-specific 2-thiouridylase MnmA, found in Nitratidesulfovibrio vulgaris (strain ATCC 29579 / DSM 644 / CCUG 34227 / NCIMB 8303 / VKM B-1760 / Hildenborough) (Desulfovibrio vulgaris).